The sequence spans 427 residues: Diaminobutyrate--2-oxoglutarate transaminase (427 aa).

The residue at position 269 (lysine 269) is an N6-(pyridoxal phosphate)lysine.

This sequence belongs to the class-III pyridoxal-phosphate-dependent aminotransferase family. Pyridoxal 5'-phosphate is required as a cofactor.

The enzyme catalyses L-2,4-diaminobutanoate + 2-oxoglutarate = L-aspartate 4-semialdehyde + L-glutamate. It participates in amine and polyamine biosynthesis; ectoine biosynthesis; L-ectoine from L-aspartate 4-semialdehyde: step 1/3. In terms of biological role, catalyzes reversively the conversion of L-aspartate beta-semialdehyde (ASA) to L-2,4-diaminobutyrate (DABA) by transamination with L-glutamate. The sequence is that of Diaminobutyrate--2-oxoglutarate transaminase (ectB) from Marinococcus halophilus.